Reading from the N-terminus, the 365-residue chain is Glycine oxidase (365 aa).

Residues 12–13 (VI), 32–33 (DQ), 40–41 (SS), 45–47 (GGI), and Ile173 each bind FAD. Residue Arg302 coordinates substrate. 327 to 333 (HYRNGLV) lines the FAD pocket.

This sequence belongs to the DAO family. ThiO subfamily. Monomer. The cofactor is FAD.

It catalyses the reaction glycine + O2 + H2O = glyoxylate + H2O2 + NH4(+). The enzyme catalyses sarcosine + O2 + H2O = methylamine + glyoxylate + H2O2. Its pathway is cofactor biosynthesis; thiamine diphosphate biosynthesis. Its function is as follows. Catalyzes the oxidation of glycine, leading to glyoxyl imine and hydrogen peroxide as primary products; glyoxyl imine is used for the biosynthesis of the thiazole ring of thiamine. Otherwise, glyoxyl imine is spontaneously hydrolyzed in water to produce glyoxylate and ammonia. Can also use sarcosine (N-methylglycine) as substrate, and, to a lesser extent, N-ethylglycine and D-proline. Has no activity towards other amino-acids D-Asp, D-Glu, D-Gln, D-His, D-Leu, D-Lys, D-ornithine, D-Trp, D-Val, L-Ala, L-Asp, L-Glu, L-His, L-Leu, L-Lys, L-Met and L-Pro. In Pseudomonas putida (strain ATCC 47054 / DSM 6125 / CFBP 8728 / NCIMB 11950 / KT2440), this protein is Glycine oxidase.